We begin with the raw amino-acid sequence, 221 residues long: 2,3-bisphosphoglycerate-dependent phosphoglycerate mutase (221 aa).

Residues 8-15 (RHGNSLWN), 21-22 (TG), R60, 87-90 (ERHY), K98, 114-115 (RR), and 174-175 (GN) contribute to the substrate site. H9 functions as the Tele-phosphohistidine intermediate in the catalytic mechanism. The active-site Proton donor/acceptor is the E87. Positions 114-140 (RRGYDTPPPPLHSQADDPRYEEPPPLS) are disordered.

It belongs to the phosphoglycerate mutase family. BPG-dependent PGAM subfamily.

It carries out the reaction (2R)-2-phosphoglycerate = (2R)-3-phosphoglycerate. It participates in carbohydrate degradation; glycolysis; pyruvate from D-glyceraldehyde 3-phosphate: step 3/5. Its function is as follows. Catalyzes the interconversion of 2-phosphoglycerate and 3-phosphoglycerate. This Tropheryma whipplei (strain TW08/27) (Whipple's bacillus) protein is 2,3-bisphosphoglycerate-dependent phosphoglycerate mutase.